A 134-amino-acid chain; its full sequence is Interleukin-5 (134 aa).

Residues 1–19 (MRMLLHLSLLALGAAYVYA) form the signal peptide. Thr-22 carries an O-linked (GalNAc...) threonine glycan. Residue Asn-47 is glycosylated (N-linked (GlcNAc...) asparagine).

This sequence belongs to the IL-5 family. In terms of assembly, homodimer; disulfide-linked. Interacts with IL5RA. Interacts with CSF2RB. Present in peripheral blood mononuclear cells.

Its subcellular location is the secreted. In terms of biological role, homodimeric cytokine expressed predominantly by T-lymphocytes and NK cells that plays an important role in the survival, differentiation, and chemotaxis of eosinophils. Also acts on activated and resting B-cells to induce immunoglobulin production, growth, and differentiation. Mechanistically, exerts its biological effects through a receptor composed of IL5RA subunit and the cytokine receptor common subunit beta/CSF2RB. Binding to the receptor leads to activation of various kinases including LYN, SYK and JAK2 and thereby propagates signals through the RAS-MAPK and JAK-STAT5 pathways respectively. The polypeptide is Interleukin-5 (IL5) (Homo sapiens (Human)).